The sequence spans 489 residues: Rhamnulokinase (489 aa).

13-17 (ASSGR) provides a ligand contact to ATP. C68 and C222 are disulfide-bonded. Substrate contacts are provided by residues G83 and 236 to 238 (HDT). D237 acts as the Proton acceptor in catalysis. T259 provides a ligand contact to ATP. Residue N296 coordinates substrate. Position 304 (Q304) interacts with ATP. Residues C353 and C370 are joined by a disulfide bond. Residue G402 participates in ATP binding. A disulfide bond links C413 and C417.

The protein belongs to the rhamnulokinase family. As to quaternary structure, monomer. Mg(2+) is required as a cofactor.

It carries out the reaction L-rhamnulose + ATP = L-rhamnulose 1-phosphate + ADP + H(+). The protein operates within carbohydrate degradation; L-rhamnose degradation; glycerone phosphate from L-rhamnose: step 2/3. Functionally, involved in the catabolism of L-rhamnose (6-deoxy-L-mannose). Catalyzes the transfer of the gamma-phosphate group from ATP to the 1-hydroxyl group of L-rhamnulose to yield L-rhamnulose 1-phosphate. The sequence is that of Rhamnulokinase from Escherichia coli O1:K1 / APEC.